A 171-amino-acid polypeptide reads, in one-letter code: uncharacterized protein (171 aa).

This is an uncharacterized protein from Encephalitozoon cuniculi (strain GB-M1) (Microsporidian parasite).